Consider the following 642-residue polypeptide: Transcription factor 4 (642 aa).

Positions 1–25 are enriched in polar residues; that stretch reads MFSPPVSSGKNGPTSLASGHFTGSN. The tract at residues 1–59 is essential for MYOD1 inhibition; the sequence is MFSPPVSSGKNGPTSLASGHFTGSNVEDRSSSGSWGNGGHPSPSRNYGDGTPYDHMTSR. 4 disordered regions span residues 1–296, 311–354, 444–545, and 609–642; these read MFSP…SQTG, HTNN…EGPL, PNQV…MANN, and KRREEEKVSSEPPPLSLAGPHPGMGDASNHMGQM. 3 positions are modified to phosphoserine: Ser42, Ser63, and Ser68. Composition is skewed to polar residues over residues 83 to 98, 112 to 130, 181 to 191, 218 to 230, and 241 to 281; these read GSYSSYGRESNLQGCH, GTLSPTKPGSQYYQYSSNN, PAASTFPSSFF, GSSSHIPQSSSYC, and PSHS…TDSI. The segment covering 312–323 has biased composition (low complexity); the sequence is TNNSFSSNPSTP. Positions 340–349 are enriched in polar residues; the sequence is NGGQASSSPN. Ser347 is modified (phosphoserine). Residues 354 to 375 are leucine-zipper; sequence LHSLQSRIEDRLERLDDAIHVL. Low complexity-rich tracts occupy residues 444–455 and 478–487; these read PNQVPVPQLPVQ and GQSVSSGSSE. At Ser490 the chain carries Phosphoserine. 2 stretches are compositionally biased toward basic and acidic residues: residues 502-517 and 530-545; these read KSSEDKKLDDDKKDIK and PEQKAEREKERRMANN. The bHLH domain occupies 539-592; sequence ERRMANNARERLRVRDINEAFKELGRMVQLHLKSDKPQTKLLILHQAVAVILSL. The class A specific domain stretch occupies residues 594-617; it reads QQVRERNLNPKAACLKRREEEKVS.

Efficient DNA binding requires dimerization with another bHLH protein. Forms homo- or heterooligomers with myogenin. Interacts with HIVEP2. Interacts with NEUROD2. Interacts with AGBL1. Widely expressed.

It localises to the nucleus. Functionally, transcription factor that binds to the immunoglobulin enhancer Mu-E5/KE5-motif. Involved in the initiation of neuronal differentiation. Activates transcription by binding to the E box (5'-CANNTG-3'). Binds to the thyroglobulin promoter. This chain is Transcription factor 4 (TCF4), found in Canis lupus familiaris (Dog).